Here is a 93-residue protein sequence, read N- to C-terminus: SH3 domain-binding glutamic acid-rich-like protein 3 (93 aa).

At Ser2 the chain carries N-acetylserine. One can recognise a Glutaredoxin domain in the interval 2 to 93 (SGLRVYSTSV…DTLQEFLKLA (92 aa)). O-linked (GalNAc...) threonine glycosylation is present at Thr9.

Belongs to the SH3BGR family. Homodimer. Interacts with MYO1C (via its IQ motifs); the interaction is dependent on calcium and takes place at membrane ruffles. Post-translationally, may be glycosylated.

It is found in the cytoplasm. Its subcellular location is the cytosol. The protein localises to the cell projection. The protein resides in the ruffle membrane. It localises to the nucleus. Could act as a modulator of glutaredoxin biological activity. May play a role in cytoskeleton organization. This chain is SH3 domain-binding glutamic acid-rich-like protein 3 (Sh3bgrl3), found in Mus musculus (Mouse).